The primary structure comprises 429 residues: Enolase (429 aa).

Residue Gln-167 participates in (2R)-2-phosphoglycerate binding. Residue Glu-209 is the Proton donor of the active site. Asp-246, Glu-289, and Asp-316 together coordinate Mg(2+). (2R)-2-phosphoglycerate contacts are provided by Lys-341, Arg-370, Ser-371, and Lys-392. The active-site Proton acceptor is Lys-341.

The protein belongs to the enolase family. Component of the RNA degradosome, a multiprotein complex involved in RNA processing and mRNA degradation. Mg(2+) is required as a cofactor.

The protein localises to the cytoplasm. It localises to the secreted. Its subcellular location is the cell surface. The enzyme catalyses (2R)-2-phosphoglycerate = phosphoenolpyruvate + H2O. It functions in the pathway carbohydrate degradation; glycolysis; pyruvate from D-glyceraldehyde 3-phosphate: step 4/5. In terms of biological role, catalyzes the reversible conversion of 2-phosphoglycerate (2-PG) into phosphoenolpyruvate (PEP). It is essential for the degradation of carbohydrates via glycolysis. This chain is Enolase, found in Pseudomonas fluorescens (strain ATCC BAA-477 / NRRL B-23932 / Pf-5).